Reading from the N-terminus, the 364-residue chain is tRNA 2-selenouridine synthase (364 aa).

Residues 14 to 136 (VLNNTPLIDV…AFRNWLMQET (123 aa)) enclose the Rhodanese domain. Residue Cys97 is the S-selanylcysteine intermediate of the active site.

This sequence belongs to the SelU family. In terms of assembly, monomer.

It catalyses the reaction 5-methylaminomethyl-2-thiouridine(34) in tRNA + selenophosphate + (2E)-geranyl diphosphate + H2O + H(+) = 5-methylaminomethyl-2-selenouridine(34) in tRNA + (2E)-thiogeraniol + phosphate + diphosphate. The enzyme catalyses 5-methylaminomethyl-2-thiouridine(34) in tRNA + (2E)-geranyl diphosphate = 5-methylaminomethyl-S-(2E)-geranyl-thiouridine(34) in tRNA + diphosphate. The catalysed reaction is 5-methylaminomethyl-S-(2E)-geranyl-thiouridine(34) in tRNA + selenophosphate + H(+) = 5-methylaminomethyl-2-(Se-phospho)selenouridine(34) in tRNA + (2E)-thiogeraniol. It carries out the reaction 5-methylaminomethyl-2-(Se-phospho)selenouridine(34) in tRNA + H2O = 5-methylaminomethyl-2-selenouridine(34) in tRNA + phosphate. Functionally, involved in the post-transcriptional modification of the uridine at the wobble position (U34) of tRNA(Lys), tRNA(Glu) and tRNA(Gln). Catalyzes the conversion of 2-thiouridine (S2U-RNA) to 2-selenouridine (Se2U-RNA). Acts in a two-step process involving geranylation of 2-thiouridine (S2U) to S-geranyl-2-thiouridine (geS2U) and subsequent selenation of the latter derivative to 2-selenouridine (Se2U) in the tRNA chain. This is tRNA 2-selenouridine synthase from Sulfurovum sp. (strain NBC37-1).